A 236-amino-acid chain; its full sequence is MRFDAVTLFAEMFDAVLDYGITRRALDRGLYRFKSWNPRAFTDDPHRTVDDRPYGGGPGMLMLAEPLDRALNAVQQELASENLAPWVVHFSPRGRPLTQQRVMELKDMPALVLLCGRYEGIDERLLQRRVDEEVSLGDFVLSGGELPALALMDAIVRQLPGALNDAESAAQDSFSAGLLDCPHYTRPEVWQGMAVPQVLKSGNHAAIAKWRHEQSLRLTGALRPDLLERAQHDERN.

S-adenosyl-L-methionine contacts are provided by residues Gly116 and 136 to 141; that span reads LGDFVL.

This sequence belongs to the RNA methyltransferase TrmD family. As to quaternary structure, homodimer.

The protein resides in the cytoplasm. The catalysed reaction is guanosine(37) in tRNA + S-adenosyl-L-methionine = N(1)-methylguanosine(37) in tRNA + S-adenosyl-L-homocysteine + H(+). Functionally, specifically methylates guanosine-37 in various tRNAs. The sequence is that of tRNA (guanine-N(1)-)-methyltransferase from Thiobacillus denitrificans (strain ATCC 25259 / T1).